Reading from the N-terminus, the 365-residue chain is c-di-GMP synthase (365 aa).

It belongs to the CD-NTase family. E subfamily.

The catalysed reaction is 2 GTP = 3',3'-c-di-GMP + 2 diphosphate. Cyclic nucleotide synthase (second messenger synthase) of a CBASS antivirus system. CBASS (cyclic oligonucleotide-based antiphage signaling system) provides immunity against bacteriophage. The CD-NTase protein synthesizes cyclic nucleotides in response to infection; these serve as specific second messenger signals. The signals activate a diverse range of effectors, leading to bacterial cell death and thus abortive phage infection. A type I-D(GG) CBASS system. In terms of biological role, cyclic dinucleotide synthase that catalyzes the synthesis of c-di-GMP, has no activity with other NTP substrates. The protein is c-di-GMP synthase of Flavobacteriaceae sp. genome_bin_11.